A 33-amino-acid polypeptide reads, in one-letter code: Maurocalcin (33 aa).

3 cysteine pairs are disulfide-bonded: Cys3–Cys17, Cys10–Cys21, and Cys16–Cys32. An essential for stimulation of [3H]ryanodine binding to RYR region spans residues 22 to 24 (KRR).

It belongs to the scorpion calcin family. Post-translationally, the non-natural D-maurocalcin (a chiral analog of maurocalcin composed of D-amino acids) completely loses the ability to stimulate [3H]ryanodine binding and calcium release. Its protease resistance, combined with its efficient cell penetration at concentrations devoid of cell toxicity, suggests that it should be an excellent vector for in vivo applications. As to expression, expressed by the venom gland.

The protein localises to the secreted. Functionally, this toxin stabilizes ryanodine receptor 1 (RyR1) opening in a long-lasting subconductance state (48%-60% of the full conductance state). Furthermore, it triggers calcium release from sarcoplasmic vesicles (6.6 nM are enough to induce a sharp release, and 60% of the total calcium is released after toxin (100 nM) addition) probably by acting as a cell-penetrating peptide (CPP). In addition, it has been shown to dose-dependently stimulate ryanodine binding to RyR1 (EC(50)=12.5-26.4 nM). It also augments the bell-shaped calcium-[3H]ryanodine binding curve that is maximal at about 10 uM calcium concentration. It binds a different site as ryanodine. It acts synergistically with caffeine. In vivo, intracerebroventricular injection into mice causes death. The polypeptide is Maurocalcin (Scorpio palmatus (Israeli golden scorpion)).